A 146-amino-acid chain; its full sequence is Angiogenin (146 aa).

A signal peptide spans 1 to 24 (MVMGPHLLLLVFILGLGLTPPTLA). Position 25 is a pyrrolidone carboxylic acid (Q25). Residue H37 is the Proton acceptor of the active site. Intrachain disulfides connect C50/C105, C63/C116, and C81/C131. A Nucleolar localization signal motif is present at residues 55 to 59 (RLRNM). TRNA-binding residues include C105 and I127. Catalysis depends on H138, which acts as the Proton donor.

This sequence belongs to the pancreatic ribonuclease family. Homodimer. Interacts with RNH1; inhibiting ANG ribonuclease activity. Interacts with PCNA.

It is found in the secreted. It localises to the nucleus. Its subcellular location is the nucleolus. The protein resides in the cytoplasm. The protein localises to the stress granule. Its activity is regulated as follows. Has weak tRNA ribonuclease activity by itself due to partial autoinhibition by its C-terminus, which folds into a short alpha-helix that partially occludes the substrate-binding site. In absence of stress, the ribonuclease activity is inhibited by RNH1 in the cytoplasm. In response to stress, dissociates from RNH1 in the cytoplasm and associates with cytoplasmic ribosomes with vacant A-sites: ribosomes directly activate the tRNA ribonuclease activity of ANG by refolding the C-terminal alpha-helix. In response to stress, the angiogenic activity of ANG is inhibited by RNH1 in the nucleus. Its function is as follows. Secreted ribonuclease that can either promote or restrict cell proliferation of target cells, depending on the context. Endocytosed in target cells via its receptor PLXNB2 and translocates to the cytoplasm or nucleus. Under stress conditions, localizes to the cytoplasm and promotes the assembly of stress granules (SGs): specifically cleaves a subset of tRNAs within anticodon loops to produce tRNA-derived stress-induced fragments (tiRNAs), resulting in translation repression and inhibition of cell proliferation. tiRNas also prevent formation of apoptosome, thereby promoting cell survival. Preferentially cleaves RNAs between a pyrimidine and an adenosine residue, suggesting that it cleaves the anticodon loop of tRNA(Ala) (32-UUAGCAU-38) after positions 33 and 36. Cleaves a subset of tRNAs, including tRNA(Ala), tRNA(Glu), tRNA(Gly), tRNA(Lys), tRNA(Val), tRNA(His), tRNA(Asp) and tRNA(Sec). Under growth conditions and in differentiated cells, translocates to the nucleus and stimulates ribosomal RNA (rRNA) transcription, including that containing the initiation site sequences of 45S rRNA, thereby promoting cell growth and proliferation. Angiogenin induces vascularization of normal and malignant tissues via its ability to promote rRNA transcription. Involved in hematopoietic stem and progenitor cell (HSPC) growth and survival by promoting rRNA transcription in growth conditions and inhibiting translation in response to stress, respectively. Mediates the crosstalk between myeloid and intestinal epithelial cells to protect the intestinal epithelial barrier integrity: secreted by myeloid cells and promotes intestinal epithelial cells proliferation and survival. Also mediates osteoclast-endothelial cell crosstalk in growing bone: produced by osteoclasts and protects the neighboring vascular cells against senescence by promoting rRNA transcription. This Saimiri sciureus (Common squirrel monkey) protein is Angiogenin (ANG).